The sequence spans 548 residues: Chaperonin GroEL (548 aa).

ATP-binding positions include 30–33 (TLGP), lysine 51, 87–91 (DGTTT), glycine 415, 479–481 (NAA), and aspartate 495. The interval 524–548 (LPKEDKSSDSSSSPAGGMGGMGGMM) is disordered. The segment covering 539-548 (GGMGGMGGMM) has biased composition (gly residues).

The protein belongs to the chaperonin (HSP60) family. As to quaternary structure, forms a cylinder of 14 subunits composed of two heptameric rings stacked back-to-back. Interacts with the co-chaperonin GroES.

The protein resides in the cytoplasm. It carries out the reaction ATP + H2O + a folded polypeptide = ADP + phosphate + an unfolded polypeptide.. Functionally, together with its co-chaperonin GroES, plays an essential role in assisting protein folding. The GroEL-GroES system forms a nano-cage that allows encapsulation of the non-native substrate proteins and provides a physical environment optimized to promote and accelerate protein folding. In Buchnera aphidicola subsp. Acyrthosiphon pisum (strain Tuc7), this protein is Chaperonin GroEL.